Consider the following 338-residue polypeptide: Lipoate-protein ligase A (338 aa).

One can recognise a BPL/LPL catalytic domain in the interval 29-216; it reads PATQRVLFLW…AFFVHYGERV (188 aa). Residues arginine 71, 76-79, and lysine 134 contribute to the ATP site; that span reads GAVF. (R)-lipoate is bound at residue lysine 134.

Belongs to the LplA family. In terms of assembly, monomer.

Its subcellular location is the cytoplasm. It carries out the reaction L-lysyl-[lipoyl-carrier protein] + (R)-lipoate + ATP = N(6)-[(R)-lipoyl]-L-lysyl-[lipoyl-carrier protein] + AMP + diphosphate + H(+). Its pathway is protein modification; protein lipoylation via exogenous pathway; protein N(6)-(lipoyl)lysine from lipoate: step 1/2. It functions in the pathway protein modification; protein lipoylation via exogenous pathway; protein N(6)-(lipoyl)lysine from lipoate: step 2/2. Catalyzes both the ATP-dependent activation of exogenously supplied lipoate to lipoyl-AMP and the transfer of the activated lipoyl onto the lipoyl domains of lipoate-dependent enzymes. The protein is Lipoate-protein ligase A of Salmonella newport (strain SL254).